Here is a 494-residue protein sequence, read N- to C-terminus: Cobyric acid synthase (494 aa).

The GATase cobBQ-type domain maps to 254–453; that stretch reads KQTVAVIAYP…LHGLFEDPGA (200 aa). The Nucleophile role is filled by C338. H445 is a catalytic residue.

This sequence belongs to the CobB/CobQ family. CobQ subfamily.

The protein operates within cofactor biosynthesis; adenosylcobalamin biosynthesis. Its function is as follows. Catalyzes amidations at positions B, D, E, and G on adenosylcobyrinic A,C-diamide. NH(2) groups are provided by glutamine, and one molecule of ATP is hydrogenolyzed for each amidation. This chain is Cobyric acid synthase, found in Albidiferax ferrireducens (strain ATCC BAA-621 / DSM 15236 / T118) (Rhodoferax ferrireducens).